A 681-amino-acid chain; its full sequence is Chaperone protein HtpG (681 aa).

The segment at 1-326 is a; substrate-binding; the sequence is MQKGNIGVTT…SPDIPLNVSR (326 aa). Residues 327 to 545 form a b region; it reads SYLQSDSNVK…YMRRMKEMAN (219 aa). A c region spans residues 546 to 681; sequence IQAGMSFYGE…NFVKRSIELI (136 aa). Residues 589–620 form a disordered region; it reads IQTEMNSVSKRRNELKDSQKDKKEEDIPTAEK. A compositionally biased stretch (basic and acidic residues) spans 599–620; that stretch reads RRNELKDSQKDKKEEDIPTAEK.

This sequence belongs to the heat shock protein 90 family. As to quaternary structure, homodimer.

The protein localises to the cytoplasm. Molecular chaperone. Has ATPase activity. The polypeptide is Chaperone protein HtpG (Bacteroides thetaiotaomicron (strain ATCC 29148 / DSM 2079 / JCM 5827 / CCUG 10774 / NCTC 10582 / VPI-5482 / E50)).